We begin with the raw amino-acid sequence, 528 residues long: PC4 and SFRS1-interacting protein (528 aa).

Residues 7–64 (PGDLIFAKMKGYPHWPARVDEVPDGAVKPPTNKLPIFFFGTHETAFLGPKDIFPYSEN) enclose the PWWP domain. The segment at 61 to 348 (YSENKEKYGK…EKKRETSMDS (288 aa)) is disordered. Residue Lys75 forms a Glycyl lysine isopeptide (Lys-Gly) (interchain with G-Cter in SUMO2) linkage. Positions 92 to 106 (FSSQQASTKQSNASS) are enriched in polar residues. 3 positions are modified to phosphoserine: Ser102, Ser105, and Ser106. Residues 113 to 135 (KETNVSKEDTDQEEKASNEDVTK) show a composition bias toward basic and acidic residues. Phosphothreonine is present on residues Thr115 and Thr122. Ser129 bears the Phosphoserine mark. Thr141 bears the Phosphothreonine mark. Basic residues predominate over residues 144–153 (AARRGRKRKA). Positions 146 to 156 (RRGRKRKAEKQ) match the Nuclear localization signal motif. Ser176 and Ser205 each carry phosphoserine. Residues 212–260 (DEDKSKKKGPEEKQPKKQLKKEEEGQKEEEKPRKEPDKKEGKKEVESKR) are compositionally biased toward basic and acidic residues. Residue Ser270 is modified to Phosphoserine. Residue Thr271 is modified to Phosphothreonine. A phosphoserine mark is found at Ser272 and Ser274. Residues 285–300 (KRKGGRNFQAAHRRNM) are compositionally biased toward basic residues. Residues 303-348 (GQHEKEAGDRKRKQEEQMETEQQNKDEGKKPEVKKVEKKRETSMDS) show a composition bias toward basic and acidic residues. Coiled coils occupy residues 306–332 (EKEA…EGKK) and 369–393 (NRCI…KHTE). The tract at residues 338–415 (VEKKRETSMD…VSQVIMEKST (78 aa)) is integrase-binding domain (IBD). Position 432 is a phosphoserine (Ser432). At Thr435 the chain carries Phosphothreonine. Ser441 carries the phosphoserine modification. Positions 444 to 471 (EQRQHEEANKTKDQGKKGPNKKLEKEPT) are enriched in basic and acidic residues. Residues 444 to 528 (EQRQHEEANK…ISLKESTLDN (85 aa)) form a disordered region. Positions 472–492 (GTKSLNGGSDAQESNHPQHNG) are enriched in polar residues. Residues 496 to 528 (EDGKDSREASSKTKPPGEEREAEISLKESTLDN) show a composition bias toward basic and acidic residues. Arg515 carries the post-translational modification Citrulline. At Ser520 the chain carries Phosphoserine. At Thr525 the chain carries Phosphothreonine.

It belongs to the HDGF family. In terms of assembly, monomer. Interacts with IFRD1/PC4. Interacts (via IBD domain) with POGZ (via IBM motif) and CDCA7L (via IBM motifs). Interacts (via IBD domain) with KMT2A (via IBM motifs) with a moderate affinity whereas interacts with the KMT2A-MEN1 complex with a greater affinity; MEN1 enhances interaction of KMT2A with PSIP1. Interacts (via IBD domain) with IWS1 (via IBM motif), MED1 (via IBM motif) and DBF4 (via IBM motifs). Post-translationally, citrullinated by PADI4.

It localises to the nucleus. In terms of biological role, transcriptional coactivator involved in neuroepithelial stem cell differentiation and neurogenesis. Involved in particular in lens epithelial cell gene regulation and stress responses. May play an important role in lens epithelial to fiber cell terminal differentiation. May play a protective role during stress-induced apoptosis. The sequence is that of PC4 and SFRS1-interacting protein (Psip1) from Mus musculus (Mouse).